Consider the following 212-residue polypeptide: Large ribosomal subunit protein uL3 (212 aa).

The residue at position 153 (Gln153) is an N5-methylglutamine.

Belongs to the universal ribosomal protein uL3 family. Part of the 50S ribosomal subunit. Forms a cluster with proteins L14 and L19. Methylated by PrmB.

Its function is as follows. One of the primary rRNA binding proteins, it binds directly near the 3'-end of the 23S rRNA, where it nucleates assembly of the 50S subunit. This Dechloromonas aromatica (strain RCB) protein is Large ribosomal subunit protein uL3.